Here is a 247-residue protein sequence, read N- to C-terminus: Probable transcriptional regulatory protein BHWA1_01533 (247 aa).

A disordered region spans residues 1 to 22 (MSGHSKWASIKHKKAANDSKKG).

This sequence belongs to the TACO1 family.

The protein localises to the cytoplasm. This is Probable transcriptional regulatory protein BHWA1_01533 from Brachyspira hyodysenteriae (strain ATCC 49526 / WA1).